The chain runs to 470 residues: Tigger transposable element-derived protein 3 (470 aa).

An HTH psq-type domain is found at Leu-3–Leu-55. 2 consecutive DNA-binding regions (H-T-H motif) follow at residues Gln-31–Asn-51 and Pro-100–Arg-130. The 71-residue stretch at Glu-67–Thr-137 folds into the HTH CENPB-type domain. Positions Phe-167–Phe-360 constitute a DDE-1 domain. Residues Asp-402–Glu-421 are compositionally biased toward basic and acidic residues. The disordered stretch occupies residues Asp-402 to Pro-426.

Belongs to the tigger transposable element derived protein family.

The protein localises to the nucleus. This Mus musculus (Mouse) protein is Tigger transposable element-derived protein 3 (Tigd3).